The sequence spans 748 residues: Wings apart-like protein homolog 1 (748 aa).

Disordered regions lie at residues 23–199 (TLAQ…VYAT) and 614–644 (EGGC…RLDR). A compositionally biased stretch (low complexity) spans 35–64 (PSVRSSDSPDVPDTPDVPVNQLSSPPLSLP). 2 stretches are compositionally biased toward polar residues: residues 68–79 (SEGNAETLQNLS) and 87–96 (LSQSSTSSLN). The span at 172–182 (ISSSSNRYSSR) shows a compositional bias: low complexity. The region spanning 205–723 (KPLASGYGSR…KRLYDFTKAT (519 aa)) is the WAPL domain. A compositionally biased stretch (acidic residues) spans 616–633 (GCGDEEEEEEGGDESSDE). Residues 634–644 (DGVRKDGRLDR) are compositionally biased toward basic and acidic residues.

Belongs to the WAPL family.

It is found in the nucleus. Functionally, regulator of meiotic chromosome structure and function, playing a role in sister chromatid cohesion, possibly via antagonizing the coh-3/-4 association with axial elements in nuclei during late prophase, cohesin association with chromatin, DNA double strand break repair and polar body positioning following meiotic divisions during oogenesis. Regulates the morphogenesis and temporal assembly of axial elements to control the organization of meiotic chromosomes in pachytene nuclei and is also involved in meiotic chromosomal remodeling in late pachytene nuclei. Required for the removal of the cohesin component scc-1 from mitotic chromosomes. In Caenorhabditis elegans, this protein is Wings apart-like protein homolog 1.